The sequence spans 450 residues: Exodeoxyribonuclease 7 large subunit (450 aa).

Belongs to the XseA family. Heterooligomer composed of large and small subunits.

The protein localises to the cytoplasm. It catalyses the reaction Exonucleolytic cleavage in either 5'- to 3'- or 3'- to 5'-direction to yield nucleoside 5'-phosphates.. Functionally, bidirectionally degrades single-stranded DNA into large acid-insoluble oligonucleotides, which are then degraded further into small acid-soluble oligonucleotides. The sequence is that of Exodeoxyribonuclease 7 large subunit from Listeria welshimeri serovar 6b (strain ATCC 35897 / DSM 20650 / CCUG 15529 / CIP 8149 / NCTC 11857 / SLCC 5334 / V8).